A 304-amino-acid polypeptide reads, in one-letter code: Bifunctional phosphoglucose/phosphomannose isomerase (304 aa).

The 132-residue stretch at 16 to 147 folds into the SIS domain; sequence FDKSFKVGKY…KPKIGDVDEA (132 aa). Residues G35, S36, S74, S76, T79, and R122 each contribute to the D-fructose 6-phosphate site. The Proton acceptor role is filled by E196. D-fructose 6-phosphate is bound by residues H212 and K300. The active-site Proton donor is the H212. The Proton acceptor role is filled by K300.

Belongs to the PGI/PMI family. Homodimer.

It carries out the reaction alpha-D-glucose 6-phosphate = beta-D-fructose 6-phosphate. The enzyme catalyses D-mannose 6-phosphate = D-fructose 6-phosphate. In terms of biological role, dual specificity isomerase that catalyzes the isomerization of both glucose-6-phosphate and mannose-6-phosphate to fructose-6-phosphate. This Thermoplasma volcanium (strain ATCC 51530 / DSM 4299 / JCM 9571 / NBRC 15438 / GSS1) protein is Bifunctional phosphoglucose/phosphomannose isomerase.